Reading from the N-terminus, the 335-residue chain is Cytoskeleton protein RodZ (335 aa).

The Cytoplasmic segment spans residues 1-111; sequence MNTEATHDQN…LGKRRKKRDG (111 aa). Positions 19 to 71 constitute an HTH cro/C1-type domain; the sequence is LRNAREQLGLSQQAVAERLCLKVSTVRDIEEDKAPADLASTFLRGYIRSYARL. The segment at residues 30–49 is a DNA-binding region (H-T-H motif); it reads QQAVAERLCLKVSTVRDIEE. Residues 112–132 form a helical; Signal-anchor for type II membrane protein membrane-spanning segment; the sequence is WLMTFTWLVLFVVIGLSGAWW. The Periplasmic segment spans residues 133-335; it reads WQDHKAQQEE…TLNAEQSPAQ (203 aa). A compositionally biased stretch (polar residues) spans 148–164; sequence DQSSAELNNNQSQSVPL. Positions 148–239 are disordered; that stretch reads DQSSAELNNN…PDGAAPLPTD (92 aa). 2 stretches are compositionally biased toward low complexity: residues 165–205 and 217–239; these read DTST…DPQQ and DTAA…LPTD.

This sequence belongs to the RodZ family.

Its subcellular location is the cell inner membrane. Cytoskeletal protein that is involved in cell-shape control through regulation of the length of the long axis. This Escherichia coli O6:K15:H31 (strain 536 / UPEC) protein is Cytoskeleton protein RodZ.